Here is a 508-residue protein sequence, read N- to C-terminus: Glucose-1-phosphate adenylyltransferase small subunit 1, chloroplastic (508 aa).

The tract at residues 1–27 is disordered; it reads MSSIVTSGVINVPRSSSSSKNLSFSSS. Residues 1-59 constitute a chloroplast transit peptide; the sequence is MSSIVTSGVINVPRSSSSSKNLSFSSSSQLSGNKILTVSGNGAPRGRCTLKHVFLTPKA. Over residues 15–27 the composition is skewed to low complexity; it reads SSSSSKNLSFSSS.

The protein belongs to the bacterial/plant glucose-1-phosphate adenylyltransferase family. As to quaternary structure, heterotetramer. In terms of tissue distribution, seeds.

It localises to the plastid. Its subcellular location is the chloroplast. It carries out the reaction alpha-D-glucose 1-phosphate + ATP + H(+) = ADP-alpha-D-glucose + diphosphate. It functions in the pathway glycan biosynthesis; starch biosynthesis. Its activity is regulated as follows. Activated by 3'phosphoglycerate, inhibited by orthophosphate. Allosteric regulation. In terms of biological role, this protein plays a role in synthesis of starch. It catalyzes the synthesis of the activated glycosyl donor, ADP-glucose from Glc-1-P and ATP. This chain is Glucose-1-phosphate adenylyltransferase small subunit 1, chloroplastic (AGPC), found in Vicia faba (Broad bean).